The chain runs to 393 residues: tRNA(Met) cytidine acetate ligase (393 aa).

The ATP site is built by Gly81, Asn142, and Arg167.

This sequence belongs to the TmcAL family.

The protein localises to the cytoplasm. The catalysed reaction is cytidine(34) in elongator tRNA(Met) + acetate + ATP = N(4)-acetylcytidine(34) in elongator tRNA(Met) + AMP + diphosphate. Functionally, catalyzes the formation of N(4)-acetylcytidine (ac(4)C) at the wobble position of elongator tRNA(Met), using acetate and ATP as substrates. First activates an acetate ion to form acetyladenylate (Ac-AMP) and then transfers the acetyl group to tRNA to form ac(4)C34. The chain is tRNA(Met) cytidine acetate ligase from Bacillus thuringiensis (strain Al Hakam).